Here is a 1364-residue protein sequence, read N- to C-terminus: Outer kinetochore KNL1 complex subunit spc7 (1364 aa).

The segment covering Met1 to Asn15 has biased composition (polar residues). Disordered regions lie at residues Met1–Gln36, Tyr124–Ser190, and Glu202–Gln223. Over residues Tyr124 to Thr136 the composition is skewed to basic and acidic residues. Polar residues predominate over residues Gly157 to Gln169. The span at Ser170 to Ser181 shows a compositional bias: low complexity. The MELT; degenerate signature appears at Met254–Thr257. Thr257 carries the phosphothreonine; by mph1 modification. The segment at Ala289–Asp334 is disordered. A compositionally biased stretch (low complexity) spans Ser300–Ser310. A compositionally biased stretch (basic and acidic residues) spans Lys318–Asn328. Positions Met450–Thr453 match the MELT; degenerate motif. Thr453 carries the phosphothreonine; by mph1 modification. The segment at Ile456–Phe503 is disordered. The span at Asn471–Ser481 shows a compositional bias: polar residues. The MELT; degenerate signature appears at Met504–Thr507. Thr507 carries the phosphothreonine; by mph1 modification. 2 disordered regions span residues Leu564–Asp643 and Gly697–Asn837. The span at Ser566–Glu585 shows a compositional bias: basic and acidic residues. Positions Asn586–Ser617 are enriched in polar residues. Residues Glu719 to Glu730 are compositionally biased toward basic and acidic residues. Residues Leu747 to Ser773 are compositionally biased toward polar residues. The span at Ser791–Arg802 shows a compositional bias: basic and acidic residues. Polar residues predominate over residues Val808–Gly820. Residues Leu1075–Glu1155 adopt a coiled-coil conformation. The short motif at Arg1091–Glu1105 is the Nuclear localization signal element.

Component of the KNL1/SPC105 complex composed of at least spc7 and sos7. Part of the outer kinetochore KMN network that includes the KNL1, MIS12 and NDC80 complexes. Interacts (via C-terminus) with sos7 (via C-terminus); the interaction is direct. Interacts (when phosphorylated on MELT motifs) with bub1 and bub3; to recruit the BUB1-BUB3 complex to the kinetochore. Post-translationally, phosphorylation of threonine residues in the MELT motifs by mph1/mps1 leads to recruitment of bub1 and bub3 to the kinetochore, and is required to maintain spindle assembly checkpoint signaling.

It is found in the nucleus. Its subcellular location is the chromosome. It localises to the centromere. The protein resides in the kinetochore. In terms of biological role, acts as a component of the outer kinetochore KNL1 complex that serves as a docking point for spindle assembly checkpoint components and mediates microtubule-kinetochore interactions. Kinetochores, consisting of a centromere-associated inner segment and a microtubule-contacting outer segment, play a crucial role in chromosome segregation by mediating the physical connection between centromeric DNA and spindle microtubules. The outer kinetochore is made up of the ten-subunit KMN network, comprising the MIS12, NDC80 and KNL1 complexes, and auxiliary microtubule-associated components; together they connect the outer kinetochore with the inner kinetochore, bind microtubules, and mediate interactions with mitotic checkpoint proteins that delay anaphase until chromosomes are bioriented on the spindle. Recruits the BUB1-BUB3 complex to kinetochores when phosphorylated by mph1/mps1, to support spindle assembly checkpoint signaling. Functions both in mitotic and in meiotic chromosome segregation. The chain is Outer kinetochore KNL1 complex subunit spc7 from Schizosaccharomyces pombe (strain 972 / ATCC 24843) (Fission yeast).